A 545-amino-acid polypeptide reads, in one-letter code: EH domain-containing protein 1 (545 aa).

2 consecutive EF-hand domains span residues 14-49 and 50-83; these read ENQMIYKEWFEFSDSDGDGRITGNDAIKFFTMSNLP and RPELKQIWAIADSKRQGYLGFKEFIVAMQLVSLA. An EH domain is found at 15–93; it reads NQMIYKEWFE…QTGHEISHEV (79 aa). Positions 27, 29, 31, 33, 38, 61, 67, and 72 each coordinate Ca(2+). One can recognise a Dynamin-type G domain in the interval 194-429; it reads FDAKPMVMLL…DLLADLKDIP (236 aa). Residues 204–211 form a G1 motif region; sequence GQYSTGKT. 204–211 serves as a coordination point for GTP; sequence GQYSTGKT. Residues 230–231 are G2 motif; it reads EP. Positions 292 to 295 are G3 motif; that stretch reads DTPG. Residues 309–313 and lysine 359 each bind GTP; that span reads DFTGV. Residues 358–361 are G4 motif; the sequence is NKAD. A region of interest (G5 motif) is located at residue valine 382. Residue 395–398 coordinates GTP; the sequence is SFSD. Positions 467–490 form a coiled coil; that stretch reads KAKAQQKLIDNLEDEFGKVQREHH.

Belongs to the TRAFAC class dynamin-like GTPase superfamily. Dynamin/Fzo/YdjA family. EHD subfamily. Homooligomer, and heterooligomer with EHD2.

It localises to the endosome membrane. Its subcellular location is the cell membrane. The protein resides in the cytoplasm. The catalysed reaction is GTP + H2O = GDP + phosphate + H(+). Its function is as follows. Involved in endocytosis positive regulation. Acts in early endocytic membrane fusion and membrane trafficking of recycling endosomes. Confers salt tolerance. This chain is EH domain-containing protein 1, found in Arabidopsis thaliana (Mouse-ear cress).